The primary structure comprises 398 residues: Methionine import ATP-binding protein MetN 2 (398 aa).

The ABC transporter domain occupies Val-43–Leu-282. Gly-79–Ser-86 is an ATP binding site.

The protein belongs to the ABC transporter superfamily. Methionine importer (TC 3.A.1.24) family. As to quaternary structure, the complex is composed of two ATP-binding proteins (MetN), two transmembrane proteins (MetI) and a solute-binding protein (MetQ).

It localises to the cell inner membrane. It carries out the reaction L-methionine(out) + ATP + H2O = L-methionine(in) + ADP + phosphate + H(+). The enzyme catalyses D-methionine(out) + ATP + H2O = D-methionine(in) + ADP + phosphate + H(+). Part of the ABC transporter complex MetNIQ involved in methionine import. Responsible for energy coupling to the transport system. The sequence is that of Methionine import ATP-binding protein MetN 2 from Burkholderia lata (strain ATCC 17760 / DSM 23089 / LMG 22485 / NCIMB 9086 / R18194 / 383).